Reading from the N-terminus, the 157-residue chain is Crossover junction endodeoxyribonuclease RuvC (157 aa).

Active-site residues include Asp7, Glu67, and Asp139. The Mg(2+) site is built by Asp7, Glu67, and Asp139.

Belongs to the RuvC family. As to quaternary structure, homodimer which binds Holliday junction (HJ) DNA. The HJ becomes 2-fold symmetrical on binding to RuvC with unstacked arms; it has a different conformation from HJ DNA in complex with RuvA. In the full resolvosome a probable DNA-RuvA(4)-RuvB(12)-RuvC(2) complex forms which resolves the HJ. The cofactor is Mg(2+).

It is found in the cytoplasm. The catalysed reaction is Endonucleolytic cleavage at a junction such as a reciprocal single-stranded crossover between two homologous DNA duplexes (Holliday junction).. Its function is as follows. The RuvA-RuvB-RuvC complex processes Holliday junction (HJ) DNA during genetic recombination and DNA repair. Endonuclease that resolves HJ intermediates. Cleaves cruciform DNA by making single-stranded nicks across the HJ at symmetrical positions within the homologous arms, yielding a 5'-phosphate and a 3'-hydroxyl group; requires a central core of homology in the junction. The consensus cleavage sequence is 5'-(A/T)TT(C/G)-3'. Cleavage occurs on the 3'-side of the TT dinucleotide at the point of strand exchange. HJ branch migration catalyzed by RuvA-RuvB allows RuvC to scan DNA until it finds its consensus sequence, where it cleaves and resolves the cruciform DNA. The protein is Crossover junction endodeoxyribonuclease RuvC of Prochlorococcus marinus (strain AS9601).